A 101-amino-acid chain; its full sequence is MNKLGHNELKECLKTATDSLQTVQPSISQTCTSYGPALGAPLPGRNEVALLTSLPPNYEISEGKPRAISAYVRAGKGNVTRRRKKTHLGNDDGKKEAQEKM.

The segment at 76-101 (KGNVTRRRKKTHLGNDDGKKEAQEKM) is disordered. Residues 88 to 101 (LGNDDGKKEAQEKM) show a composition bias toward basic and acidic residues.

This is an uncharacterized protein from Homo sapiens (Human).